Reading from the N-terminus, the 362-residue chain is Putative gustatory receptor 89a (362 aa).

Over 1-38 (MLRFPHVCGLCLLLKYWQILALAPFRTSEPMVARCQRW) the chain is Cytoplasmic. Residues 39-59 (MTLIAVFRWLLLTSMAPFVLW) traverse the membrane as a helical segment. Topologically, residues 60–74 (KSAAMYEATNVRHSM) are extracellular. Residues 75–95 (VFKTIALATMTGDVCISLALL) form a helical membrane-spanning segment. The Cytoplasmic portion of the chain corresponds to 96–126 (GNHLWNRRELANLVNDLARLHRRRRLSWWST). Residues 127–147 (LFLWLKLLLSLYDLLCSVPFL) traverse the membrane as a helical segment. Residues 148–166 (KGAGGRLPWSQLVAYGVQL) lie on the Extracellular side of the membrane. A helical membrane pass occupies residues 167–187 (YFQHVASVYGNGIFGGILLML). The Cytoplasmic segment spans residues 188–223 (ECYNQLEREEPTNLARLLQKEYSWLRLIQRFVKLFQ). A helical membrane pass occupies residues 224-244 (LGIFLLVLGSFVNIMVNIYAF). Residues 245–255 (MSYYVSLHGVP) are Extracellular-facing. A helical transmembrane segment spans residues 256–276 (LTISNNCLVLAIQLYAVILAA). Residues 277–333 (HLCQVRSAKLRKKCLQLEYVPEGLTQEQAMASTPFPVLTPTGNVKFRILGVFILDNS) lie on the Cytoplasmic side of the membrane. The chain crosses the membrane as a helical span at residues 334–354 (FWLFLVSYAMNFIVVILQTSF). The Extracellular portion of the chain corresponds to 355 to 362 (EHINHGEI).

The protein belongs to the insect chemoreceptor superfamily. Gustatory receptor (GR) family. Gr77a subfamily.

It localises to the cell membrane. Functionally, probable gustatory receptor which mediates acceptance or avoidance behavior, depending on its substrates. The chain is Putative gustatory receptor 89a (Gr89a) from Drosophila melanogaster (Fruit fly).